Reading from the N-terminus, the 332-residue chain is Ribose-phosphate pyrophosphokinase (332 aa).

Residue 57-59 (DGE) participates in ATP binding. Residues H150 and D189 each coordinate Mg(2+). Residue K213 is part of the active site. D-ribose 5-phosphate is bound by residues R215, D239, and 243–247 (DTAGT).

The protein belongs to the ribose-phosphate pyrophosphokinase family. Class I subfamily. As to quaternary structure, homohexamer. It depends on Mg(2+) as a cofactor.

Its subcellular location is the cytoplasm. It catalyses the reaction D-ribose 5-phosphate + ATP = 5-phospho-alpha-D-ribose 1-diphosphate + AMP + H(+). Its pathway is metabolic intermediate biosynthesis; 5-phospho-alpha-D-ribose 1-diphosphate biosynthesis; 5-phospho-alpha-D-ribose 1-diphosphate from D-ribose 5-phosphate (route I): step 1/1. Functionally, involved in the biosynthesis of the central metabolite phospho-alpha-D-ribosyl-1-pyrophosphate (PRPP) via the transfer of pyrophosphoryl group from ATP to 1-hydroxyl of ribose-5-phosphate (Rib-5-P). The protein is Ribose-phosphate pyrophosphokinase of Gloeobacter violaceus (strain ATCC 29082 / PCC 7421).